A 125-amino-acid chain; its full sequence is Ribosome-binding factor A (125 aa).

It belongs to the RbfA family. Monomer. Binds 30S ribosomal subunits, but not 50S ribosomal subunits or 70S ribosomes.

The protein localises to the cytoplasm. One of several proteins that assist in the late maturation steps of the functional core of the 30S ribosomal subunit. Associates with free 30S ribosomal subunits (but not with 30S subunits that are part of 70S ribosomes or polysomes). Required for efficient processing of 16S rRNA. May interact with the 5'-terminal helix region of 16S rRNA. This is Ribosome-binding factor A from Kosmotoga olearia (strain ATCC BAA-1733 / DSM 21960 / TBF 19.5.1).